A 305-amino-acid chain; its full sequence is UDP-3-O-acyl-N-acetylglucosamine deacetylase (305 aa).

Zn(2+)-binding residues include His-78, His-237, and Asp-241. Residue His-264 is the Proton donor of the active site.

Belongs to the LpxC family. It depends on Zn(2+) as a cofactor.

It carries out the reaction a UDP-3-O-[(3R)-3-hydroxyacyl]-N-acetyl-alpha-D-glucosamine + H2O = a UDP-3-O-[(3R)-3-hydroxyacyl]-alpha-D-glucosamine + acetate. It participates in glycolipid biosynthesis; lipid IV(A) biosynthesis; lipid IV(A) from (3R)-3-hydroxytetradecanoyl-[acyl-carrier-protein] and UDP-N-acetyl-alpha-D-glucosamine: step 2/6. Catalyzes the hydrolysis of UDP-3-O-myristoyl-N-acetylglucosamine to form UDP-3-O-myristoylglucosamine and acetate, the committed step in lipid A biosynthesis. This Cupriavidus pinatubonensis (strain JMP 134 / LMG 1197) (Cupriavidus necator (strain JMP 134)) protein is UDP-3-O-acyl-N-acetylglucosamine deacetylase.